A 197-amino-acid chain; its full sequence is Gastrula zinc finger protein XlCGF17.1 (197 aa).

7 C2H2-type zinc fingers span residues 6–28 (ISCSECGKCFIKSSELTVHQMTH), 34–56 (YSCSECGKCFASLSHLRVHQKIH), 62–84 (FSCSECGKCFLNRGSLVRHHRTH), 90–112 (FFCSECGKRFAASSDLRVHRRTH), 118–140 (FSCSECEKRFLNPWSLVRHYRTH), 146–169 (FSCSECGKCFARSSDLTVHRRRSH), and 175–197 (FSCSECGKCFTSSSELTVHLRTH).

The protein belongs to the krueppel C2H2-type zinc-finger protein family.

It is found in the nucleus. In terms of biological role, may be involved in transcriptional regulation. The polypeptide is Gastrula zinc finger protein XlCGF17.1 (Xenopus laevis (African clawed frog)).